A 157-amino-acid polypeptide reads, in one-letter code: Transmembrane protein 50A (157 aa).

The residue at position 2 (serine 2) is an N-acetylserine. Serine 2 is modified (phosphoserine). The next 4 helical transmembrane spans lie at 26-46 (IAAG…AVMY), 58-78 (TCGV…NGQV), 95-115 (IWLF…MWIL), and 126-146 (VVYP…GGLV).

The protein belongs to the UPF0220 family.

It localises to the membrane. This is Transmembrane protein 50A (Tmem50a) from Mus musculus (Mouse).